The chain runs to 607 residues: Pescadillo homolog (607 aa).

One can recognise a BRCT domain in the interval 320 to 413 (KLKNLFKGLK…KLLPVNKYLI (94 aa)). The segment at 486-607 (EALNSGALEE…KTQRKEILAK (122 aa)) is disordered. Residues 495 to 511 (EAPEEEDDDEEAPEEDE) are compositionally biased toward acidic residues. A compositionally biased stretch (basic and acidic residues) spans 530–549 (IFKENPSEQKKLTKQEEALR). Over residues 551–562 (RMVKSRHKKLYR) the composition is skewed to basic residues. The span at 563–607 (KMLEKQKKQTKEANLLKEKRQQIDKKQRVEQTQKRKTQRKEILAK) shows a compositional bias: basic and acidic residues.

Belongs to the pescadillo family.

Its subcellular location is the nucleus. It is found in the nucleolus. It localises to the nucleoplasm. In terms of biological role, required for maturation of ribosomal RNAs and formation of the large ribosomal subunit. In Culex quinquefasciatus (Southern house mosquito), this protein is Pescadillo homolog.